The primary structure comprises 343 residues: Biotin synthase 2 (343 aa).

Residues 58–285 form the Radical SAM core domain; it reads NEVQLSTLLS…LTMVRLSAGR (228 aa). Residues Cys-73, Cys-77, and Cys-80 each coordinate [4Fe-4S] cluster. [2Fe-2S] cluster-binding residues include Cys-117, Cys-148, Cys-208, and Arg-280.

This sequence belongs to the radical SAM superfamily. Biotin synthase family. Homodimer. [4Fe-4S] cluster is required as a cofactor. [2Fe-2S] cluster serves as cofactor.

It carries out the reaction (4R,5S)-dethiobiotin + (sulfur carrier)-SH + 2 reduced [2Fe-2S]-[ferredoxin] + 2 S-adenosyl-L-methionine = (sulfur carrier)-H + biotin + 2 5'-deoxyadenosine + 2 L-methionine + 2 oxidized [2Fe-2S]-[ferredoxin]. It participates in cofactor biosynthesis; biotin biosynthesis; biotin from 7,8-diaminononanoate: step 2/2. Functionally, catalyzes the conversion of dethiobiotin (DTB) to biotin by the insertion of a sulfur atom into dethiobiotin via a radical-based mechanism. This Polaromonas sp. (strain JS666 / ATCC BAA-500) protein is Biotin synthase 2.